The sequence spans 307 residues: Cuticle collagen 36 (307 aa).

2 disordered regions span residues 76–102 and 116–307; these read TRSRRDAGYKEGSGSGGSGSGGYGGPT and QQGP…PPGY. The segment covering 86–102 has biased composition (gly residues); it reads EGSGSGGSGSGGYGGPT. Triple-helical region stretches follow at residues 89 to 105, 118 to 150, 167 to 187, 194 to 226, 231 to 257, and 260 to 295; these read GSGGSGSGGYGGPTGAG, GPAGPPGPAGDTGPNGNDGHHGAPGVPGKEGSI, GPQGAVGQQGPKGPPGPKGKS, GKNGEPGMIGPPGPPGGVGEPGPPGPAGQPGRV, GAAGPAGPRGVKGPPGPKGLPGIAGLT, and GGQGPPGDAGGPGPVGGQGPPGPQGPQGPPGDEGSC. Pro residues predominate over residues 157–168; the sequence is PSEPCIICPPGP. Residues 186 to 196 show a composition bias toward basic and acidic residues; that stretch reads KSQERAADGKN. The segment covering 202 to 220 has biased composition (pro residues); sequence IGPPGPPGGVGEPGPPGPA. Residues 231–242 show a composition bias toward low complexity; sequence GAAGPAGPRGVK. Residues 258-278 show a composition bias toward gly residues; that stretch reads EIGGQGPPGDAGGPGPVGGQG. The segment covering 279–288 has biased composition (pro residues); sequence PPGPQGPQGP.

It belongs to the cuticular collagen family. Collagen polypeptide chains are complexed within the cuticle by disulfide bonds and other types of covalent cross-links.

In terms of biological role, nematode cuticles are composed largely of collagen-like proteins. The cuticle functions both as an exoskeleton and as a barrier to protect the worm from its environment. The chain is Cuticle collagen 36 (col-36) from Caenorhabditis elegans.